The chain runs to 669 residues: Armadillo repeat-containing protein gudu (669 aa).

The span at 1–10 (MIGTSSGTSH) shows a compositional bias: polar residues. Residues 1-53 (MIGTSSGTSHNRSRKKKEQCGSCPNRFSKDKRQVAAEDSDTTEVESSTDEEER) form a disordered region. The span at 37-51 (EDSDTTEVESSTDEE) shows a compositional bias: acidic residues. ARM repeat units follow at residues 100–139 (QINQ…DITL), 141–180 (IDIR…NVCK), 240–279 (KHNM…KCSS), 281–320 (PKFQ…KCAF), 322–365 (GTTR…MCAV), 367–406 (DANV…ECVR), 408–447 (QSNR…ECAE), 492–531 (DSAE…TIAQ), 574–613 (GNNT…KLSM), and 615–654 (PQNC…NIRE).

Highly expressed in testis.

Important for spermatogenesis where it may have a role in sperm individualization. This chain is Armadillo repeat-containing protein gudu, found in Drosophila melanogaster (Fruit fly).